The following is a 149-amino-acid chain: Deoxyuridine 5'-triphosphate nucleotidohydrolase (149 aa).

Substrate contacts are provided by residues 68–70 (RSG), Asn-81, and 85–87 (LID).

This sequence belongs to the dUTPase family. It depends on Mg(2+) as a cofactor.

The enzyme catalyses dUTP + H2O = dUMP + diphosphate + H(+). It participates in pyrimidine metabolism; dUMP biosynthesis; dUMP from dCTP (dUTP route): step 2/2. In terms of biological role, this enzyme is involved in nucleotide metabolism: it produces dUMP, the immediate precursor of thymidine nucleotides and it decreases the intracellular concentration of dUTP so that uracil cannot be incorporated into DNA. The sequence is that of Deoxyuridine 5'-triphosphate nucleotidohydrolase from Nitrosospira multiformis (strain ATCC 25196 / NCIMB 11849 / C 71).